Consider the following 1104-residue polypeptide: tRNA ligase 1 (1104 aa).

Catalysis depends on Lys-152, which acts as the N6-AMP-lysine intermediate.

Belongs to the TRL1 family. Mg(2+) serves as cofactor. Mainly expressed in proliferating cells and tissues such as root meristems, the vasculature of developing plantlets, flowers and elongating tissue.

Its subcellular location is the nucleus. It localises to the cytoplasm. The catalysed reaction is ATP + (ribonucleotide)n-3'-hydroxyl + 5'-phospho-(ribonucleotide)m = (ribonucleotide)n+m + AMP + diphosphate.. Requires the presence of NTP, preferentially ATP rather than dATP, UTP, CTP and GTP, respectively, to mediate ribonucleotide 5'-phosphorylation. Its function is as follows. Essential component of stress-response pathways entailing repair of RNA breaks with 2',3'-cyclic phosphate and 5'-OH ends. Tri-functional enzyme that repairs RNA breaks with 2',3'-cyclic-PO(4) and 5'-OH ends. The ligation activity requires three sequential enzymatic activities: opening of the 2'3'-cyclic phosphodiester bond of the 5' half-tRNA leaving a 2'-phosphomonoester (CPDase activity), phosphorylation of the 5' terminus of the 3' half-tRNA in the presence of ATP (kinase activity) and ligation of the two tRNA halves in an ATP-dependent reaction (ligase activity). Deficient in transferring AMP to pRNA(OH) to form AppRNA(OH) but proficient at sealing pre-adenylylated AppRNA(OH). CPDase and kinase reactions are almost insensitive to RNA length, whereas the ligase activity decreases with shorter RNA size. Can also splice DNA ended by a single 3'-terminal ribonucleoside 2',3'-cyclic-PO(4). Binds to mRNA, mature and immature. Exhibits tRNA ligase activity in vitro. Required for the splicing of precursor tRNA molecules containing introns. Can circularize an intron cleaved from a pre-tRNA by splicing endonuclease in vitro. Seems not involved in unfolded protein response (UPR) in the endoplasmic reticulum. Involved in auxin signaling and polar transport during organ morphogenesis. The chain is tRNA ligase 1 from Arabidopsis thaliana (Mouse-ear cress).